Here is a 98-residue protein sequence, read N- to C-terminus: Cystatin-B (98 aa).

At M1 the chain carries N-acetylmethionine. Residues Q46–G50 carry the Secondary area of contact motif.

Belongs to the cystatin family. Able to form dimers stabilized by noncovalent forces.

The protein resides in the cytoplasm. This is an intracellular thiol proteinase inhibitor. This is Cystatin-B (CSTB) from Bos taurus (Bovine).